A 403-amino-acid chain; its full sequence is MAPVGAKKGLLERLDAGEVVIGDGGFVFALEKRGYVKAGPWTPEAAVEHPEAVRQLHREFLRAGANVMQTFTFYASDDKLENRGNYVAEKISGQKVNEVACDIAREVANEGDALVAGGVSQTPSYLSCKSEVEVKGIFRKQLDVFIKKNVDFLIAEYFEHVEEAVWAVEVLKESGKPVAATLCIGPEGDLNGVSPGECAVRLAKAGASVVGVNCHFDPMTCVATVKLMKEGLVAAKVKAHLMTQPLAYHTPDCGKQGFIDLPEFPFALEPRIVTRWDIHKYARAAYDLGVRYIGGCCGFEPYHTRAIAEELAPERGFLPKGSEKHGSWGSGLEMHTKPWVRARARRDYWEKLPPASGRPYCPSMSKPDEWGVTKGDADLMQQKEATTEQQLKDLIAKQGIKSN.

A Hcy-binding domain is found at 8-311 (KGLLERLDAG…YHTRAIAEEL (304 aa)). Zn(2+) is bound by residues cysteine 214, cysteine 296, and cysteine 297.

In terms of assembly, homotetramer. Zn(2+) is required as a cofactor.

It localises to the cytoplasm. The catalysed reaction is L-homocysteine + glycine betaine = N,N-dimethylglycine + L-methionine. It functions in the pathway amine and polyamine degradation; betaine degradation; sarcosine from betaine: step 1/2. Its pathway is amino-acid biosynthesis; L-methionine biosynthesis via de novo pathway; L-methionine from L-homocysteine (BhmT route): step 1/1. Involved in the regulation of homocysteine metabolism. Converts betaine and homocysteine to dimethylglycine and methionine, respectively. This reaction is also required for the irreversible oxidation of choline. This is Betaine--homocysteine S-methyltransferase 1 (bhmt) from Xenopus laevis (African clawed frog).